We begin with the raw amino-acid sequence, 227 residues long: ATP-dependent dethiobiotin synthetase BioD (227 aa).

13-18 (NIGKTI) provides a ligand contact to ATP. T17 lines the Mg(2+) pocket. Residue K38 is part of the active site. S42 contributes to the substrate binding site. Residues D55, 117–120 (EGFG), 177–178 (NH), 206–208 (PFI), and N213 each bind ATP. The Mg(2+) site is built by D55 and E117.

It belongs to the dethiobiotin synthetase family. Homodimer. The cofactor is Mg(2+).

It localises to the cytoplasm. The enzyme catalyses (7R,8S)-7,8-diammoniononanoate + CO2 + ATP = (4R,5S)-dethiobiotin + ADP + phosphate + 3 H(+). Its pathway is cofactor biosynthesis; biotin biosynthesis; biotin from 7,8-diaminononanoate: step 1/2. Its function is as follows. Catalyzes a mechanistically unusual reaction, the ATP-dependent insertion of CO2 between the N7 and N8 nitrogen atoms of 7,8-diaminopelargonic acid (DAPA, also called 7,8-diammoniononanoate) to form a ureido ring. This Wigglesworthia glossinidia brevipalpis protein is ATP-dependent dethiobiotin synthetase BioD.